Here is a 311-residue protein sequence, read N- to C-terminus: Olfactory receptor 10G8 (311 aa).

The Extracellular portion of the chain corresponds to 1–23; sequence MSNASLLTAFILMGLPHAPALDA. A glycan (N-linked (GlcNAc...) asparagine) is linked at asparagine 3. A helical transmembrane segment spans residues 24–44; it reads PLFGVFLVVYVLTVLGNLLIL. Residues 45–52 lie on the Cytoplasmic side of the membrane; it reads LVIRVDSH. The helical transmembrane segment at 53 to 73 threads the bilayer; that stretch reads LHTTMYYFLTNLSFIDMWFST. Residues 74–98 lie on the Extracellular side of the membrane; sequence VTVPKLLMTLVFPSGRAISFHSCMA. The cysteines at positions 96 and 188 are disulfide-linked. Residues 99–119 traverse the membrane as a helical segment; it reads QLYFFHFLGGTECFLYRVMSC. Residues 120–138 lie on the Cytoplasmic side of the membrane; it reads DRYLAISYPLRYTSMMTGR. Residues 139 to 159 form a helical membrane-spanning segment; the sequence is SCTLLATSTWLSGSLHSAVQA. Topologically, residues 160–196 are extracellular; it reads ILTFHLPYCGPNWIQHYLCDAPPILKLACADTSAIET. The chain crosses the membrane as a helical span at residues 197 to 216; it reads VIFVTVGIVASGCFVLIVLS. Residues 217–236 lie on the Cytoplasmic side of the membrane; sequence YVSIVCSILRIRTSEGKHRA. A helical membrane pass occupies residues 237-257; sequence FQTCASHCIVVLCFFGPGLFI. The Extracellular portion of the chain corresponds to 258-268; that stretch reads YLRPGSRKAVD. Residues 269 to 289 traverse the membrane as a helical segment; it reads GVVAVFYTVLTPLLNPVVYTL. Residues 290-311 are Cytoplasmic-facing; that stretch reads RNKEVKKALLKLKDKVAHSQSK.

Belongs to the G-protein coupled receptor 1 family.

It localises to the cell membrane. In terms of biological role, odorant receptor. This is Olfactory receptor 10G8 (OR10G8) from Homo sapiens (Human).